The primary structure comprises 100 residues: Sec-independent protein translocase protein TatA (100 aa).

Residues 1-21 (MGALKPWHIAVLVVVLILLFG) traverse the membrane as a helical segment. The segment covering 44–55 (KSLHDDDRDLAE) has biased composition (basic and acidic residues). The segment at 44 to 100 (KSLHDDDRDLAEKANAQAGYQPLPPQVQQEPYPQQTPYQAPPQQQPVVDPVQRARDS) is disordered. A compositionally biased stretch (low complexity) spans 69 to 81 (QVQQEPYPQQTPY).

The protein belongs to the TatA/E family. As to quaternary structure, the Tat system comprises two distinct complexes: a TatABC complex, containing multiple copies of TatA, TatB and TatC subunits, and a separate TatA complex, containing only TatA subunits. Substrates initially bind to the TatABC complex, which probably triggers association of the separate TatA complex to form the active translocon.

The protein resides in the cell membrane. Functionally, part of the twin-arginine translocation (Tat) system that transports large folded proteins containing a characteristic twin-arginine motif in their signal peptide across membranes. TatA could form the protein-conducting channel of the Tat system. This Salinispora arenicola (strain CNS-205) protein is Sec-independent protein translocase protein TatA.